Here is a 124-residue protein sequence, read N- to C-terminus: Glutaredoxin-2 (124 aa).

Residues Cys-13 and Cys-16 are joined by a disulfide bond.

This sequence belongs to the glutaredoxin family. In terms of assembly, homodimer.

The protein resides in the host cytoplasm. Glutaredoxin necessary for virion morphogenesis and virus replication. Functions as a thiol-disulfide transfer protein between membrane-associated OPG128 and substrates OPG095 or OPG053. The complete pathway for formation of disulfide bonds in intracellular virion membrane proteins sequentially involves oxidation of OPG072, OPG128 and OPG088. Exhibit thioltransferase and dehydroascorbate reductase activities in vitro. The polypeptide is Glutaredoxin-2 (OPG088) (Bos taurus (Bovine)).